Consider the following 257-residue polypeptide: Snake venom serine protease KN2 (257 aa).

The signal sequence occupies residues 1–18; the sequence is MVLIRVLANLLILQLSYA. Residues 19-24 constitute a propeptide that is removed on maturation; the sequence is QKSSEL. The Peptidase S1 domain maps to 25–248; sequence VIGGHPCNIN…HLDWIKSIIA (224 aa). 6 cysteine pairs are disulfide-bonded: Cys31–Cys162, Cys49–Cys65, Cys97–Cys255, Cys141–Cys209, Cys173–Cys188, and Cys199–Cys224. Catalysis depends on charge relay system residues His64 and Asp109. 2 N-linked (GlcNAc...) asparagine glycosylation sites follow: Asn120 and Asn121. The active-site Charge relay system is the Ser203.

Belongs to the peptidase S1 family. Snake venom subfamily. In terms of assembly, monomer. As to expression, expressed by the venom gland.

Its subcellular location is the secreted. In terms of biological role, snake venom serine protease that may act in the hemostasis system of the prey. This Trimeresurus stejnegeri (Chinese green tree viper) protein is Snake venom serine protease KN2.